The chain runs to 112 residues: uncharacterized protein (112 aa).

Residues 1–25 form the signal peptide; the sequence is MKGTKLAVVVGMTVAAVSLAAPAQA.

This is an uncharacterized protein from Mycobacterium tuberculosis (strain CDC 1551 / Oshkosh).